The primary structure comprises 353 residues: Fe(3+) ions import ATP-binding protein FbpC (353 aa).

The ABC transporter domain maps to 9–239; sequence VTFENVTKKF…PASAFIADFM (231 aa). 41–48 is a binding site for ATP; the sequence is GPSGCGKT.

Belongs to the ABC transporter superfamily. Fe(3+) ion importer (TC 3.A.1.10) family. In terms of assembly, the complex is composed of two ATP-binding proteins (FbpC), two transmembrane proteins (FbpB) and a solute-binding protein (FbpA).

The protein localises to the cell inner membrane. The enzyme catalyses Fe(3+)(out) + ATP + H2O = Fe(3+)(in) + ADP + phosphate + H(+). Part of the ABC transporter complex FbpABC involved in Fe(3+) ions import. Responsible for energy coupling to the transport system. In Brucella abortus (strain 2308), this protein is Fe(3+) ions import ATP-binding protein FbpC.